The following is a 481-amino-acid chain: Inosine-5'-monophosphate dehydrogenase (481 aa).

2 consecutive CBS domains span residues 92–148 and 152–209; these read VIND…SKKV and MTKM…PEAN. NAD(+)-binding positions include D244 and 293-295; that span reads GIG. Residues G295 and G297 each coordinate K(+). S298 is an IMP binding site. Residue C300 coordinates K(+). The active-site Thioimidate intermediate is C300. IMP is bound by residues 333–335, 356–357, and 380–384; these read DGG, GS, and YRGMG. R396 (proton acceptor) is an active-site residue. E410 provides a ligand contact to IMP. The K(+) site is built by E464, S465, and H466.

This sequence belongs to the IMPDH/GMPR family. As to quaternary structure, homotetramer. K(+) is required as a cofactor.

The catalysed reaction is IMP + NAD(+) + H2O = XMP + NADH + H(+). It functions in the pathway purine metabolism; XMP biosynthesis via de novo pathway; XMP from IMP: step 1/1. Its activity is regulated as follows. Mycophenolic acid (MPA) is a non-competitive inhibitor that prevents formation of the closed enzyme conformation by binding to the same site as the amobile flap. In contrast, mizoribine monophosphate (MZP) is a competitive inhibitor that induces the closed conformation. MPA is a potent inhibitor of mammalian IMPDHs but a poor inhibitor of the bacterial enzymes. MZP is a more potent inhibitor of bacterial IMPDH. In terms of biological role, catalyzes the conversion of inosine 5'-phosphate (IMP) to xanthosine 5'-phosphate (XMP), the first committed and rate-limiting step in the de novo synthesis of guanine nucleotides, and therefore plays an important role in the regulation of cell growth. This Helicobacter pylori (strain J99 / ATCC 700824) (Campylobacter pylori J99) protein is Inosine-5'-monophosphate dehydrogenase.